The sequence spans 43 residues: S-layer protein 1 (43 aa).

The protein localises to the secreted. The protein resides in the cell wall. It localises to the S-layer. Its function is as follows. The S-layer is a paracrystalline mono-layered assembly of proteins which coat the surface of bacteria. This is S-layer protein 1 from Bacillus thuringiensis subsp. konkukian.